A 44-amino-acid polypeptide reads, in one-letter code: pyr operon leader peptide (44 aa).

The chain is pyr operon leader peptide (pyrL) from Shigella flexneri.